The following is a 174-amino-acid chain: UBX domain-containing protein 5 (174 aa).

Residues 8–58 adopt a coiled-coil conformation; it reads QKEKFAEDRALLSQQNKEYAESLAKDIAKKEEKDKIRFEAEQKELRKKTIQ. The region spanning 74–120 is the UBX domain; it reads RLLVRYPNGSRLILSFSPSQPMTSLFDAIILNPACPDYFSVRSVYPR.

As to quaternary structure, forms a complex composed of deubiquitinating enzyme atx-3, adapter ubxn-5 and cdc-48.1. Interacts with atx-3 (via C-terminus). Interacts with cdc-48.1 (via N-terminus) and cdc-48.2. Specifically expressed in the germline.

In terms of biological role, probably acts as an adapter for ATPase cdc-48.1 and/or cdc-48.2, conferring substrate specificity. Unlike other UBX domain-containing protein does not bind 'Lys-48'-polyubiquitinated chain. This Caenorhabditis elegans protein is UBX domain-containing protein 5.